Reading from the N-terminus, the 712-residue chain is Osmolarity two-component system protein SSK1 (712 aa).

The tract at residues 73 to 114 (ADNTSSNNTNDNSCRSKSNGAGSGANLSVNSNTKSSVSPTAG) is disordered. Low complexity predominate over residues 74 to 85 (DNTSSNNTNDNS). Residues 87 to 113 (RSKSNGAGSGANLSVNSNTKSSVSPTA) are compositionally biased toward polar residues. Phosphoserine occurs at positions 110, 195, 327, 351, 368, and 380. The interval 340–362 (KADLKGKDGNSSPQEFKLITDEE) is disordered. The disordered stretch occupies residues 448–468 (EVQRRKEDVTPASPILTSSQT). Residues 505-647 (NVLIVEDNVI…WLSKKITEWG (143 aa)) form the Response regulatory domain. Asp554 carries the post-translational modification 4-aspartylphosphate. Positions 672-712 (KSPQKPIAPSNPHSFKQATSMTPTHSPVRKNSNLSPTQIEL) are disordered. Ser673 carries the phosphoserine modification. A compositionally biased stretch (polar residues) spans 682–712 (NPHSFKQATSMTPTHSPVRKNSNLSPTQIEL). Thr693 bears the Phosphothreonine mark. Residues Ser703 and Ser706 each carry the phosphoserine modification.

This sequence belongs to the SSK1 family. In terms of assembly, interacts with SSK2, SSK22 and YPD1. The phosphorelay mechanism involves the sequential transfer of a phosphate group from 'His-576' (H1) to 'Asp-1144' (D1) of SLN1, then to 'His-64' (H2) of YPD1 and finally to Asp-554 (D2) of SSK1.

The protein resides in the cytoplasm. Final receptor of the SLN1-YPD1-SSK1 two-component regulatory system, which controls activity of the HOG1 pathway in response to changes in the osmolarity of the extracellular environment. Under normal osmotic conditions, maintained in a phosphorylated and inactive state by the phosphorelay intermediate protein YPD1. Under conditions of high osmolarity, the histidine kinase SLN1 is no longer active and the unphosphorylated form of SSK1 interacts with and activates SSK2 and SSK22, two MAPKKKs that further stimulate the PBS2-HOG1 MAPKK-MAPK cascade. Unphosphorylated SSK1 is subsequently degraded by the UBC7-dependent ubiquitin-proteasome system to down-regulate the HOG1 pathway after completion of the osmotic adaptation. This is Osmolarity two-component system protein SSK1 from Saccharomyces cerevisiae (strain ATCC 204508 / S288c) (Baker's yeast).